Consider the following 498-residue polypeptide: Glycerol kinase (498 aa).

Residue T12 coordinates ADP. T12, T13, and S14 together coordinate ATP. T12 contributes to the sn-glycerol 3-phosphate binding site. Residue R16 coordinates ADP. Residues R82, E83, Y134, and D243 each coordinate sn-glycerol 3-phosphate. Glycerol contacts are provided by R82, E83, Y134, D243, and Q244. 2 residues coordinate ADP: T265 and G308. T265, G308, Q312, and G409 together coordinate ATP. Positions 409 and 413 each coordinate ADP.

The protein belongs to the FGGY kinase family. Homotetramer and homodimer (in equilibrium).

The catalysed reaction is glycerol + ATP = sn-glycerol 3-phosphate + ADP + H(+). The protein operates within polyol metabolism; glycerol degradation via glycerol kinase pathway; sn-glycerol 3-phosphate from glycerol: step 1/1. With respect to regulation, activated by phosphorylation and inhibited by fructose 1,6-bisphosphate (FBP). Functionally, key enzyme in the regulation of glycerol uptake and metabolism. Catalyzes the phosphorylation of glycerol to yield sn-glycerol 3-phosphate. The protein is Glycerol kinase of Agathobacter rectalis (strain ATCC 33656 / DSM 3377 / JCM 17463 / KCTC 5835 / VPI 0990) (Eubacterium rectale).